Consider the following 47-residue polypeptide: Large ribosomal subunit protein bL27c-2 (47 aa).

It belongs to the bacterial ribosomal protein bL27 family.

Its subcellular location is the plastid. It localises to the chloroplast. This Cyanidium caldarium (Red alga) protein is Large ribosomal subunit protein bL27c-2.